A 2157-amino-acid chain; its full sequence is MVHNSPCNKHKTTSISWTRILAGRCTGLFVQVSNRRRFRTQAIAFFLGEPTRGENTTEEKNPKRHKYRDFVMLVQLPRLTSSLREPFDIDQAYLRRKTILQTLNKPRSSGNRLDESDLAKRIVHQWEGASLEVRQAYKQFIGAVVELIDREVPSDEFREVAFSAYRLFNNPVEEDDSDINDNISISGKKLELQNLVGHAVSDANVKNVASFAQALYSIQPTHQSETYADEVNGGAEFGADLVFNLPARFLVEASLDETGFVDVESNDAHTSFSEGWSGVSDTKNNLSAGKFNLSWLRDACGRMVRETNSQLSREELAMAICRFLDSDKPGEEIAGDLLDLVGDGAFETVQDLIMHRKEIVDAIHHGQMILKSDKAASNTQSRMPTYGTQVTVQTESAKQIEKLRRKEEKKNKRNADLGLESEISEANFSSLLEASEKKTAFEDLIGSGEANSLALALPQGTVRKHLKGYEEVFIPPTPTAQMKPGEKLIEIKELDDFAQAAFHGYKSLNRIQSRIFQTVYHTNENILVCAPTGAGKTNIAMISVLHEIKQHFRDGYLHKNEFKIVYVAPMKALAAEVTSAFSRRLAPLNMVVKELTGDMQLTKTELEETQMIVTTPEKWDVITRKSSDMSMSMLVKLLIIDEVHLLNDDRGAVIEALVARTLRQVESTQTMIRIVGLSATLPSYLQVAQFLRVNTDTGLFYFDSSYRPVPLAQQYIGITEHNFAARNELLNEICYKKVVDSIKQGHQAMIFVHSRKDTSKTAEKLVDLARQYETLDLFTNETHPQFQLMKKDVMKSRNKDLVKFFEAGFGIHHAGMLRSDRTLTERLFSDGLLKVLVCTATLAWGVNLPAHTVVIKGTQLYDAKAGGWKDLGMLDVMQIFGRAGRPQFDKSGEGIIITSHDKLAYYLRLLTSQLPIESQFISSLKDNLNAEVVLGTVTNVKEACAWLGYTYLSIRMKLNPLAYGIGWEEIIADPSLSLKQRALVADAARSLDKAKMMRFDEKSGNFYCTELGRVASHFYIQYSSVETYNEMLKRHMNESEIINMVAHSSEFENIVVREEEQHELETLARSCCPLEVKGGPSNKHGKISILIQLYISRGSIDAFSLVSDASYISASLARIMRALFEICLRKGWCEMTLFMLEYCKAVDRQLWPHQHPLRQFERDLPSDILRKLEERRDDLDHLYEMEEKEIGALIRYNPGGRLVKQHLGYFPSIQLAATVSPITRTVLKVDLLITPNFIWKDRFHGTALRWWILIEDTENDYIYHSDLFTLTKRMARGEPQKLSFTVPIFEPHPPQYYVHAVSDSWLHAETYFTISFHNLALPEARTSHTELLDLKPLPVTSLGNKLYESLYKFSHFNPIQTQIFHVLYHTDNNVLVGAPTGSGKTISAELAMLRLFSTQPDMKVVYIAPLKAIVRERMNDWKKHLVAPLGKEMVEMTGDYTPDLVALLSADIIISTPEKWDGISRNWHTRSYVKKVGLVILDEIHLLGADRGPILEVIVSRMRYISSQTERSVRFVGLSTALANAGDLADWLGVGEIGLFNFKPSVRPVPIEVHIQGYPGKYYCPRMNSMNKPAYAAICTHSPTKPVLIFVSSRRQTRLTALDLIQFAASDEHPRQFLSVSEEDLQMVLSQITDQNLRHTLQFGIGLHHAGLNDHDRSAVEELFTNNKIQVLVSTSTLAWGVNLPAHLVIIKGTEYFDGKTKRYVDFPLTEILQMMGRAGRPQFDQHGKAVILVHEPKKSFYKKFLYEPFPVESSLKEKLHDHFNAEIVSGTIGNKEDAVHYLTWTYLFRRLMANPAYYGLEGTQDETICSYLSRLVQTTFEDLEDSGCLKVNEDSVEPTMLGTIASQYYLCYMTVSMFGSNIGPDTSLEAFLHILAGASEYDELPVRHNEENYNKTLSDRVRYPVDNNHLDDPHVKANLLFQAHFSQLALPISDYNTDLKSVLDQSIRILQAMIDICANSGWLSSSLTCMRLLQMVMQGMWSDQDSSLWMIPCMNDLLLGSLTARGIHTLHQLLNLPRETLQSVTENFPASRLSQDLQRFPRIQMNVRLQKKDSDGKKKPSTLEIRLEKTSKRNSSRALAPRFPKVKDEAWWLVLGDTSTSELFAVKRVSFTGRLITRMELPPNITSFQDTKLILVSDCYLGFEQEHSIEQLARRG.

The tract at residues 374-394 (KAASNTQSRMPTYGTQVTVQT) is disordered. A compositionally biased stretch (polar residues) spans 375–394 (AASNTQSRMPTYGTQVTVQT). The Helicase ATP-binding 1 domain occupies 517–699 (QTVYHTNENI…FLRVNTDTGL (183 aa)). 530-537 (APTGAGKT) contacts ATP. The DEVH box signature appears at 641 to 644 (DEVH). Residues 734 to 932 (CYKKVVDSIK…SLKDNLNAEV (199 aa)) form the Helicase C-terminal 1 domain. Positions 1008–1315 (CTELGRVASH…LHAETYFTIS (308 aa)) constitute an SEC63 1 domain. Positions 1365–1540 (HVLYHTDNNV…WLGVGEIGLF (176 aa)) constitute a Helicase ATP-binding 2 domain. 1378-1385 (APTGSGKT) provides a ligand contact to ATP. Residues 1482 to 1485 (DEIH) carry the DEIH box motif. Positions 1571 to 1780 (NKPAYAAICT…GTIGNKEDAV (210 aa)) constitute a Helicase C-terminal 2 domain. Positions 1839–2150 (PTMLGTIASQ…YLGFEQEHSI (312 aa)) constitute an SEC63 2 domain.

This sequence belongs to the DExH box helicase family.

It is found in the nucleus. The catalysed reaction is ATP + H2O = ADP + phosphate + H(+). Functionally, RNA helicase that plays an essential role in pre-mRNA splicing as component of the U5 snRNP and U4/U6-U5 tri-snRNP complexes. Involved in spliceosome assembly, activation and disassembly. The sequence is that of DExH-box ATP-dependent RNA helicase DExH14 from Arabidopsis thaliana (Mouse-ear cress).